The sequence spans 757 residues: Endonuclease MutS2 (757 aa).

Residue 321 to 328 (GPNMGGKT) coordinates ATP. A Smr domain is found at 681-756 (IDIRGMTVEE…GTGVTVVEVK (76 aa)).

It belongs to the DNA mismatch repair MutS family. MutS2 subfamily. As to quaternary structure, homodimer. Binds to stalled ribosomes, contacting rRNA.

In terms of biological role, endonuclease that is involved in the suppression of homologous recombination and thus may have a key role in the control of bacterial genetic diversity. Functionally, acts as a ribosome collision sensor, splitting the ribosome into its 2 subunits. Detects stalled/collided 70S ribosomes which it binds and splits by an ATP-hydrolysis driven conformational change. Acts upstream of the ribosome quality control system (RQC), a ribosome-associated complex that mediates the extraction of incompletely synthesized nascent chains from stalled ribosomes and their subsequent degradation. Probably generates substrates for RQC. The protein is Endonuclease MutS2 of Thermotoga sp. (strain RQ2).